A 66-amino-acid chain; its full sequence is Protein translocase subunit SecE (66 aa).

A helical membrane pass occupies residues leucine 41 to leucine 61.

Belongs to the SecE/SEC61-gamma family. As to quaternary structure, component of the Sec protein translocase complex. Heterotrimer consisting of SecY (alpha), SecG (beta) and SecE (gamma) subunits. The heterotrimers can form oligomers, although 1 heterotrimer is thought to be able to translocate proteins. Interacts with the ribosome. May interact with SecDF, and other proteins may be involved.

The protein localises to the cell membrane. In terms of biological role, essential subunit of the Sec protein translocation channel SecYEG. Clamps together the 2 halves of SecY. May contact the channel plug during translocation. The sequence is that of Protein translocase subunit SecE from Archaeoglobus fulgidus (strain ATCC 49558 / DSM 4304 / JCM 9628 / NBRC 100126 / VC-16).